The primary structure comprises 441 residues: uncharacterized protein (441 aa).

The signal sequence occupies residues 1–23; the sequence is MSRKYLLSLLLVGALVISVVASG. Cysteine 24 is modified (N-acetylcysteine). Residue cysteine 24 is the site of S-archaeol cysteine attachment.

Belongs to the bacterial solute-binding protein 1 family.

It localises to the cell membrane. Probably part of a binding-protein-dependent transport system PH1214/15/16. This is an uncharacterized protein from Pyrococcus horikoshii (strain ATCC 700860 / DSM 12428 / JCM 9974 / NBRC 100139 / OT-3).